Here is a 347-residue protein sequence, read N- to C-terminus: tRNA N6-adenosine threonylcarbamoyltransferase (347 aa).

His109 and His113 together coordinate Fe cation. Substrate is bound by residues 136–140, Asp169, Gly182, Asp186, and Asn284; that span reads TVSGG. Position 312 (Asp312) interacts with Fe cation.

It belongs to the KAE1 / TsaD family. Requires Fe(2+) as cofactor.

The protein resides in the cytoplasm. It catalyses the reaction L-threonylcarbamoyladenylate + adenosine(37) in tRNA = N(6)-L-threonylcarbamoyladenosine(37) in tRNA + AMP + H(+). Its function is as follows. Required for the formation of a threonylcarbamoyl group on adenosine at position 37 (t(6)A37) in tRNAs that read codons beginning with adenine. Is involved in the transfer of the threonylcarbamoyl moiety of threonylcarbamoyl-AMP (TC-AMP) to the N6 group of A37, together with TsaE and TsaB. TsaD likely plays a direct catalytic role in this reaction. This is tRNA N6-adenosine threonylcarbamoyltransferase from Chlorobium phaeobacteroides (strain BS1).